Consider the following 318-residue polypeptide: Ribose-phosphate pyrophosphokinase 2 (318 aa).

96–101 (RQDKKD) lines the ATP pocket. Residues Asp-128, His-130, Asp-139, and Asp-143 each coordinate Mg(2+). His-130 is an ATP binding site. The segment at 212–227 (KDRVAILVDDMADTCG) is binding of phosphoribosylpyrophosphate.

It belongs to the ribose-phosphate pyrophosphokinase family. In terms of assembly, homodimer. The active form is probably a hexamer composed of 3 homodimers. It depends on Mg(2+) as a cofactor.

It carries out the reaction D-ribose 5-phosphate + ATP = 5-phospho-alpha-D-ribose 1-diphosphate + AMP + H(+). It functions in the pathway metabolic intermediate biosynthesis; 5-phospho-alpha-D-ribose 1-diphosphate biosynthesis; 5-phospho-alpha-D-ribose 1-diphosphate from D-ribose 5-phosphate (route I): step 1/1. Activated by magnesium and inorganic phosphate. Competitively or non-competitively inhibited by ADP, 2,3-bisphosphoglyceride or GDP. Its function is as follows. Catalyzes the synthesis of phosphoribosylpyrophosphate (PRPP) that is essential for nucleotide synthesis. The protein is Ribose-phosphate pyrophosphokinase 2 (prps2) of Xenopus tropicalis (Western clawed frog).